The following is a 367-amino-acid chain: MSFDSVPRHALSMRFDLEPPSHASAAHRVAVLLVNLGTPDAPTPRAVRRYLAQFLSDPRVVEIPQLVWQVILCTLILPLRGRASAKKYAAVWLPEGSPLRVYTERQVESVKPLFAANGYRVIVDYAMRYGTPSIADVLAQLKRAGAERVLLLPMYPQYSSSTTATAFDAAFAALGRMRNQPEVRTVRHYADHPAYIHALAEQVRQYWAAHGRPAFDAGDKLVLSFHGVPKRTLDLGDPYHDQCQQTAALLMSALGLTTFECRVTFQSRFGKAEWLQPYTAPTLKELGAAGVRRADVFCPGFTADCLETIEEIGIEVRDEFVHGGGKEFHRIPCLNASPAWIAALGEIAAENLQGWPVRVAMAPEAVS.

Fe cation is bound by residues His-226 and Glu-307.

It belongs to the ferrochelatase family.

The protein resides in the cytoplasm. It carries out the reaction heme b + 2 H(+) = protoporphyrin IX + Fe(2+). The protein operates within porphyrin-containing compound metabolism; protoheme biosynthesis; protoheme from protoporphyrin-IX: step 1/1. Functionally, catalyzes the ferrous insertion into protoporphyrin IX. This is Ferrochelatase from Burkholderia mallei (strain NCTC 10247).